A 357-amino-acid polypeptide reads, in one-letter code: MAVKAKGQPPSGYEPKVAEWKRREVKELKELMDEYENVGLVDLEGIPAPQLQEIRAKLRERDTIIRMSRNTLMRIALEEKLDERPELEPLLDYIEGPVAFIFTNLDPFKLYKLLEESKASAPAKPGDIAPEDIVVPEGPTPFEPGPIVSELQQAGLPAQIQDGKVVITKDTVLVKEGEEIDEKTAEILKKLEIEPMEVGVDIVAIVAEGTLFERDDLAIDFDEYEDMAKEAAQHAFNLSINAAIPTAETADVIVAKAHTEALNLAVNAGVPVPDETVMGCILAKAHGEMLALAGAIAEVDEEALDEELLEMVSRSAEAAERKEKEEEEEEEAEEEEAEEEEEEEEEEAAAGLGALFG.

Residues methionine 311–glycine 357 are disordered. The segment covering glutamate 325–alanine 348 has biased composition (acidic residues).

Belongs to the universal ribosomal protein uL10 family. As to quaternary structure, part of the 50S ribosomal subunit. Forms part of the ribosomal stalk which helps the ribosome interact with GTP-bound translation factors. Forms a heptameric L10(L12)2(L12)2(L12)2 complex, where L10 forms an elongated spine to which the L12 dimers bind in a sequential fashion.

Forms part of the ribosomal stalk, playing a central role in the interaction of the ribosome with GTP-bound translation factors. This is Large ribosomal subunit protein uL10 from Methanopyrus kandleri (strain AV19 / DSM 6324 / JCM 9639 / NBRC 100938).